We begin with the raw amino-acid sequence, 182 residues long: Transcription termination/antitermination protein NusG (182 aa).

This sequence belongs to the NusG family.

Functionally, participates in transcription elongation, termination and antitermination. The polypeptide is Transcription termination/antitermination protein NusG (Chlamydia pneumoniae (Chlamydophila pneumoniae)).